Consider the following 327-residue polypeptide: MSKSTPLKSSIIRADLPEQAEGRTGPETGKDPEKTGNSEGKTDTPVIEIKDLCHRYPHLEANALDRINLRIYRGERVAVLGANGAGKSTLFKHLNGILRPLSGEVLVKGEKITKKNVRMCRGTVGIVFQDPDDQVLAPSVEEDVAFGPINMGLSREEVKMRVKEALEMVGLNGFEERAPHHLSGGQKKLVAIAGILAMRPEVIVLDEPTAGLDPLSSARVLKLITKMNRELGITLLLSTHDVDVVPYFAERVFVLHHGKLEASGSPEEIFNDPALLRKAHLRLPRVAEVFEMLKQEGVDVNIQITAETARDEILRVIRSENRKAEMK.

Residues 1-44 are disordered; the sequence is MSKSTPLKSSIIRADLPEQAEGRTGPETGKDPEKTGNSEGKTDT. A compositionally biased stretch (basic and acidic residues) spans 28 to 44; it reads TGKDPEKTGNSEGKTDT. The ABC transporter domain occupies 47–282; it reads IEIKDLCHRY…PALLRKAHLR (236 aa). Position 81 to 88 (81 to 88) interacts with ATP; sequence GANGAGKS.

Belongs to the ABC transporter superfamily.

It is found in the cell membrane. Its function is as follows. Probably part of an ABC transporter complex. Responsible for energy coupling to the transport system. In Methanosarcina mazei (strain ATCC BAA-159 / DSM 3647 / Goe1 / Go1 / JCM 11833 / OCM 88) (Methanosarcina frisia), this protein is Putative ABC transporter ATP-binding protein MM_0887.